Consider the following 142-residue polypeptide: Large ribosomal subunit protein uL13 (142 aa).

It belongs to the universal ribosomal protein uL13 family. Part of the 50S ribosomal subunit.

Its function is as follows. This protein is one of the early assembly proteins of the 50S ribosomal subunit, although it is not seen to bind rRNA by itself. It is important during the early stages of 50S assembly. The chain is Large ribosomal subunit protein uL13 from Vibrio campbellii (strain ATCC BAA-1116).